A 267-amino-acid chain; its full sequence is Phosphonates import ATP-binding protein PhnC 1 (267 aa).

An ABC transporter domain is found at 3–247; sequence LSLDGVDLVH…ALDALYANEQ (245 aa). 36–43 provides a ligand contact to ATP; the sequence is GPSGAGKT.

This sequence belongs to the ABC transporter superfamily. Phosphonates importer (TC 3.A.1.9.1) family. The complex is composed of two ATP-binding proteins (PhnC), two transmembrane proteins (PhnE) and a solute-binding protein (PhnD).

It is found in the cell inner membrane. It catalyses the reaction phosphonate(out) + ATP + H2O = phosphonate(in) + ADP + phosphate + H(+). In terms of biological role, part of the ABC transporter complex PhnCDE involved in phosphonates import. Responsible for energy coupling to the transport system. In Pseudomonas aeruginosa (strain ATCC 15692 / DSM 22644 / CIP 104116 / JCM 14847 / LMG 12228 / 1C / PRS 101 / PAO1), this protein is Phosphonates import ATP-binding protein PhnC 1.